The following is a 295-amino-acid chain: Tyrosine recombinase XerD (295 aa).

In terms of domain architecture, Core-binding (CB) spans 1–85 (METIIEEYLK…TIRSFHQFAL (85 aa)). The region spanning 106 to 289 (KLPDVLDVEE…SKTQIRQMYN (184 aa)) is the Tyr recombinase domain. Catalysis depends on residues Arg-146, Lys-170, His-241, Arg-244, and His-267. Tyr-276 serves as the catalytic O-(3'-phospho-DNA)-tyrosine intermediate.

It belongs to the 'phage' integrase family. XerD subfamily. In terms of assembly, forms a cyclic heterotetrameric complex composed of two molecules of XerC and two molecules of XerD.

Its subcellular location is the cytoplasm. Site-specific tyrosine recombinase, which acts by catalyzing the cutting and rejoining of the recombining DNA molecules. The XerC-XerD complex is essential to convert dimers of the bacterial chromosome into monomers to permit their segregation at cell division. It also contributes to the segregational stability of plasmids. The polypeptide is Tyrosine recombinase XerD (Staphylococcus haemolyticus (strain JCSC1435)).